Reading from the N-terminus, the 1846-residue chain is Brefeldin A-inhibited guanine nucleotide-exchange protein 1 (1846 aa).

The DCB; DCB:DCB domain and DCB:HUS domain interaction stretch occupies residues 2 to 224; it reads YEGKKTKNMF…QEAKQMERER (223 aa). The residue at position 52 (S52) is a Phosphoserine. 3 disordered regions span residues 216-249, 264-304, and 347-410; these read EAKQ…LRYL, DLEP…ATAA, and ISAS…SPGA. Basic and acidic residues predominate over residues 264–277; the sequence is DLEPQTHDVDKSLQ. Phosphoserine occurs at positions 286, 289, and 290. Composition is skewed to polar residues over residues 348-357 and 391-406; these read SASTEGNTGT and SVSS…SSGP. A phosphoserine mark is found at S394 and S407. The segment at 554-574 is HUS; DCB:HUS domain interaction; that stretch reads ADAQSVVDIYVNYDCDLNAAN. The segment at 631-684 is disordered; the sequence is PNSQTTLGQEKPSEQEISEVKHPETINRYGSLNSLESTSSSGIGSYSTQMSGTD. The segment covering 641–655 has biased composition (basic and acidic residues); it reads KPSEQEISEVKHPET. Residues 661–681 show a composition bias toward low complexity; it reads SLNSLESTSSSGIGSYSTQMS. The SEC7 domain occupies 688-877; it reads QFEVLKQQKE…SAIYNEIAGK (190 aa). The Nuclear localization signal (NLS) signature appears at 708-712; sequence KKPKR. Residues S1076, S1563, and S1566 each carry the phosphoserine modification.

As to quaternary structure, homodimer. Interacts with ARFGEF2/BIG2; both proteins are probably part of the same or very similar macromolecular complexes. Interacts with FKBP2. Interacts with MYO9B. Interacts with PRKAR1A and PRKAR2A. Interacts with PPP1CC. Interacts with NCL, FBL, NUP62 and U3 small nucleolar RNA. Interacts with DPY30. Interacts with PDE3A. Interacts with KANK1. Interacts with TBC1D22A and TBC1D22B. Post-translationally, phosphorylated. In vitro phosphorylated by PKA reducing its GEF activity and dephosphorylated by phosphatase PP1.

Its subcellular location is the cytoplasm. The protein resides in the perinuclear region. It localises to the golgi apparatus. The protein localises to the trans-Golgi network. It is found in the nucleus. Its subcellular location is the nucleolus. The protein resides in the nucleus matrix. It localises to the membrane. With respect to regulation, inhibited by brefeldin A. Promotes guanine-nucleotide exchange on ARF1 and ARF3. Promotes the activation of ARF1/ARF3 through replacement of GDP with GTP. Involved in vesicular trafficking. Required for the maintenance of Golgi structure; the function may be independent of its GEF activity. Required for the maturation of integrin beta-1 in the Golgi. Involved in the establishment and persistence of cell polarity during directed cell movement in wound healing. Proposed to act as A kinase-anchoring protein (AKAP) and may mediate crosstalk between Arf and PKA pathways. Inhibits GAP activity of MYO9B probably through competitive RhoA binding. The function in the nucleus remains to be determined. This chain is Brefeldin A-inhibited guanine nucleotide-exchange protein 1 (Arfgef1), found in Mus musculus (Mouse).